A 470-amino-acid chain; its full sequence is Cysteine--tRNA ligase (470 aa).

Residue cysteine 27 participates in Zn(2+) binding. Residues 29–39 (PTVYNFFHIGN) carry the 'HIGH' region motif. Positions 211, 236, and 240 each coordinate Zn(2+). Residues 268-272 (KMSKS) carry the 'KMSKS' region motif. Lysine 271 contacts ATP.

It belongs to the class-I aminoacyl-tRNA synthetase family. As to quaternary structure, monomer. Requires Zn(2+) as cofactor.

It localises to the cytoplasm. It carries out the reaction tRNA(Cys) + L-cysteine + ATP = L-cysteinyl-tRNA(Cys) + AMP + diphosphate. The protein is Cysteine--tRNA ligase of Clostridium botulinum (strain Eklund 17B / Type B).